We begin with the raw amino-acid sequence, 969 residues long: Isoleucine--tRNA ligase (969 aa).

Positions 68–78 match the 'HIGH' region motif; sequence PYANGALHMGH. Glu-585 contacts L-isoleucyl-5'-AMP. The 'KMSKS' region signature appears at 626 to 630; the sequence is KMSKS. ATP is bound at residue Lys-629. Residues Cys-939, Cys-942, Cys-959, and Cys-962 each contribute to the Zn(2+) site.

The protein belongs to the class-I aminoacyl-tRNA synthetase family. IleS type 1 subfamily. In terms of assembly, monomer. It depends on Zn(2+) as a cofactor.

It localises to the cytoplasm. The enzyme catalyses tRNA(Ile) + L-isoleucine + ATP = L-isoleucyl-tRNA(Ile) + AMP + diphosphate. Catalyzes the attachment of isoleucine to tRNA(Ile). As IleRS can inadvertently accommodate and process structurally similar amino acids such as valine, to avoid such errors it has two additional distinct tRNA(Ile)-dependent editing activities. One activity is designated as 'pretransfer' editing and involves the hydrolysis of activated Val-AMP. The other activity is designated 'posttransfer' editing and involves deacylation of mischarged Val-tRNA(Ile). This Prochlorococcus marinus (strain MIT 9211) protein is Isoleucine--tRNA ligase.